A 238-amino-acid polypeptide reads, in one-letter code: Thiamine import ATP-binding protein ThiQ (238 aa).

Residues leucine 2 to valine 230 form the ABC transporter domain. Residue glycine 32–serine 39 participates in ATP binding.

The protein belongs to the ABC transporter superfamily. Thiamine importer (TC 3.A.1.19.1) family. As to quaternary structure, the complex is composed of two ATP-binding proteins (ThiQ), two transmembrane proteins (ThiP) and a solute-binding protein (ThiB).

It localises to the cell inner membrane. It carries out the reaction thiamine(out) + ATP + H2O = thiamine(in) + ADP + phosphate + H(+). Part of the ABC transporter complex ThiBPQ involved in thiamine import. Responsible for energy coupling to the transport system. The chain is Thiamine import ATP-binding protein ThiQ from Vibrio cholerae serotype O1 (strain ATCC 39315 / El Tor Inaba N16961).